The primary structure comprises 644 residues: DNA mismatch repair protein MutL (644 aa).

Disordered stretches follow at residues 353-399 and 420-440; these read SESG…SQLT and GSMAVPRESRSGPTGESRARA. A compositionally biased stretch (polar residues) spans 370–381; sequence SPESKTHSTWNE. The segment covering 383–399 has biased composition (basic and acidic residues); it reads SRVDTSRVEISRDSQLT.

Belongs to the DNA mismatch repair MutL/HexB family.

This protein is involved in the repair of mismatches in DNA. It is required for dam-dependent methyl-directed DNA mismatch repair. May act as a 'molecular matchmaker', a protein that promotes the formation of a stable complex between two or more DNA-binding proteins in an ATP-dependent manner without itself being part of a final effector complex. The sequence is that of DNA mismatch repair protein MutL from Shewanella sp. (strain MR-4).